Reading from the N-terminus, the 356-residue chain is Glutamine synthetase cytosolic isozyme 1-1 (356 aa).

Ser-2 carries the N-acetylserine modification. A phosphoserine mark is found at Ser-2 and Ser-48. In terms of domain architecture, GS beta-grasp spans 19 to 99 (IIAEYIWVGG…VMCDAYTPAG (81 aa)). The disordered stretch occupies residues 36-62 (KARTLPGPVTDPSQLPKWNYDGSSTGQ). One can recognise a GS catalytic domain in the interval 106 to 356 (KRHAAAKVFS…IAETTILWNP (251 aa)).

It belongs to the glutamine synthetase family. Homooctamer. Interacts with CRK3 and GRF3. Phosphorylated by CRK3. Expressed in root tips, root hairs and epidermis. Ubiquitously expressed with higher levels in siliques and roots.

It is found in the cytoplasm. It catalyses the reaction L-glutamate + NH4(+) + ATP = L-glutamine + ADP + phosphate + H(+). Functionally, high-affinity glutamine synthetase which catalyzes the synthesis of glutamine from ammonium and glutamate. May contribute to the homeostatic control of glutamine synthesis in roots. The protein is Glutamine synthetase cytosolic isozyme 1-1 (GLN1-1) of Arabidopsis thaliana (Mouse-ear cress).